A 478-amino-acid chain; its full sequence is Putative indole-3-acetic acid-amido synthetase GH3.10 (478 aa).

The protein belongs to the IAA-amido conjugating enzyme family.

Its function is as follows. May catalyze the synthesis of indole-3-acetic acid (IAA)-amino acid conjugates, providing a mechanism for the plant to cope with the presence of excess auxin. This is Putative indole-3-acetic acid-amido synthetase GH3.10 (GH3.10) from Oryza sativa subsp. japonica (Rice).